Reading from the N-terminus, the 211-residue chain is DNA-directed RNA polymerases I, II, and III subunit RPABC1 (211 aa).

Belongs to the archaeal Rpo5/eukaryotic RPB5 RNA polymerase subunit family. As to quaternary structure, component of the RNA polymerase I (Pol I), RNA polymerase II (Pol II) and RNA polymerase III (Pol III) complexes consisting of at least 13, 12 and 17 subunits, respectively. In RNA Pol II, this subunit is present in 2-fold molar excess over the other subunits.

Its subcellular location is the nucleus. DNA-dependent RNA polymerase catalyzes the transcription of DNA into RNA using the four ribonucleoside triphosphates as substrates. Common component of RNA polymerases I, II and III which synthesize ribosomal RNA precursors, mRNA precursors and many functional non-coding RNAs, and small RNAs, such as 5S rRNA and tRNAs, respectively. Pol II is the central component of the basal RNA polymerase II transcription machinery. Pols are composed of mobile elements that move relative to each other. In Pol II, RPB5 is part of the lower jaw surrounding the central large cleft and thought to grab the incoming DNA template. Seems to be the major component in this process. This is DNA-directed RNA polymerases I, II, and III subunit RPABC1 (rpb-5) from Caenorhabditis elegans.